The primary structure comprises 231 residues: Ribose-5-phosphate isomerase A (231 aa).

Substrate-binding positions include 32 to 35 (TGST), 85 to 88 (DGAD), and 98 to 101 (KGGG). E107 serves as the catalytic Proton acceptor. K125 lines the substrate pocket.

It belongs to the ribose 5-phosphate isomerase family. Homodimer.

It catalyses the reaction aldehydo-D-ribose 5-phosphate = D-ribulose 5-phosphate. Its pathway is carbohydrate degradation; pentose phosphate pathway; D-ribose 5-phosphate from D-ribulose 5-phosphate (non-oxidative stage): step 1/1. Its function is as follows. Catalyzes the reversible conversion of ribose-5-phosphate to ribulose 5-phosphate. This chain is Ribose-5-phosphate isomerase A, found in Paraburkholderia xenovorans (strain LB400).